The primary structure comprises 288 residues: MKLAVYGKGGIGKSTTSCNISVALAKRGKKVLQIGCDPKHDSTFTLTGFLIPTIIDTLQEKDYHYEDVWPEDVIYKGYGGVDCVEAGGPPAGAGCGGYVVGETVKLLKELNAFDEYDVILFDVLGDVVCGGFAAPLNYADYCMIVTDNGFDALFAANRIAASVREKARTHPLRLAGLIGNRTSKRDLIEKYVEAVPMPVLEVLPLIEDIRVSRVKGKTLFEMAESDPSLNYVCDYYLSIADQILARPEGVVPNDAPDRELFSLLSDFYLNPGKPQVPNPEEELDLMIV.

Residues 10-15 (GIGKST) and lysine 39 each bind ATP. Serine 14 lines the Mg(2+) pocket. [4Fe-4S] cluster contacts are provided by cysteine 95 and cysteine 129. 180-181 (NR) lines the ATP pocket.

The protein belongs to the NifH/BchL/ChlL family. In terms of assembly, homodimer. Protochlorophyllide reductase is composed of three subunits; ChlL, ChlN and ChlB. [4Fe-4S] cluster is required as a cofactor.

It carries out the reaction chlorophyllide a + oxidized 2[4Fe-4S]-[ferredoxin] + 2 ADP + 2 phosphate = protochlorophyllide a + reduced 2[4Fe-4S]-[ferredoxin] + 2 ATP + 2 H2O. Its pathway is porphyrin-containing compound metabolism; chlorophyll biosynthesis (light-independent). In terms of biological role, component of the dark-operative protochlorophyllide reductase (DPOR) that uses Mg-ATP and reduced ferredoxin to reduce ring D of protochlorophyllide (Pchlide) to form chlorophyllide a (Chlide). This reaction is light-independent. The L component serves as a unique electron donor to the NB-component of the complex, and binds Mg-ATP. This Nostoc sp. (strain PCC 7120 / SAG 25.82 / UTEX 2576) protein is Light-independent protochlorophyllide reductase iron-sulfur ATP-binding protein.